Here is a 151-residue protein sequence, read N- to C-terminus: uncharacterized protein (151 aa).

3 helical membrane-spanning segments follow: residues 14–34 (GAAL…YWLI), 45–65 (ISLV…GYLI), and 91–111 (VIVA…ASLI).

The protein resides in the cell membrane. This is an uncharacterized protein from Bacillus subtilis (strain 168).